Reading from the N-terminus, the 57-residue chain is UPF0509 protein YciZ (57 aa).

This sequence belongs to the UPF0509 family.

In Shigella flexneri, this protein is UPF0509 protein YciZ (yciZ).